The primary structure comprises 266 residues: Undecaprenyl-diphosphatase (266 aa).

8 helical membrane passes run 1 to 21 (METF…FLPI), 39 to 59 (QGFS…VIYF), 87 to 107 (WWII…KDFI), 111 to 131 (LRNT…LWWA), 149 to 169 (ALLI…RSGA), 183 to 203 (AAAK…AILV), 218 to 238 (ALGI…YYFL), and 246 to 266 (MTPF…LILW).

Belongs to the UppP family.

It localises to the cell inner membrane. The catalysed reaction is di-trans,octa-cis-undecaprenyl diphosphate + H2O = di-trans,octa-cis-undecaprenyl phosphate + phosphate + H(+). Catalyzes the dephosphorylation of undecaprenyl diphosphate (UPP). Confers resistance to bacitracin. The chain is Undecaprenyl-diphosphatase from Shewanella denitrificans (strain OS217 / ATCC BAA-1090 / DSM 15013).